The primary structure comprises 300 residues: Ribosomal protein L11 methyltransferase (300 aa).

Residues T152, G173, D195, and N234 each contribute to the S-adenosyl-L-methionine site.

This sequence belongs to the methyltransferase superfamily. PrmA family.

The protein localises to the cytoplasm. The enzyme catalyses L-lysyl-[protein] + 3 S-adenosyl-L-methionine = N(6),N(6),N(6)-trimethyl-L-lysyl-[protein] + 3 S-adenosyl-L-homocysteine + 3 H(+). In terms of biological role, methylates ribosomal protein L11. This is Ribosomal protein L11 methyltransferase from Burkholderia orbicola (strain MC0-3).